The primary structure comprises 647 residues: MAAGVATWLPFARAAAVGWLPLAQQPLPPAPGVKASRGDEVLVVNVSGRRFETWKNTLDRYPDTLLGSSEKEFFYDADSGEYFFDRDPDMFRHVLNFYRTGRLHCPRQECIQAFDEELAFYGLVPELVGDCCLEEYRDRKKENAQRLAEDEEAEQTGDGPALPAGSSIRQRLWRAFENPHTSTAALVFYYVTGFFIAVSVIANVVETIPCRGPARRPPREQPCGDRFPLAFFCMDTACVLIFTGEYLLRLFAAPSRCRFLRSVMSLIDVVAILPYYIGLLVPKNEDVSGAFVTLRVFRVFRIFKFSRHSQGLRILGYTLKSCASELGFLLFSLTMAIIIFATVMFYAEKGTSKTNFTSIPAAFWYTIVTMTTLGYGDMVPSTIAGKIFGSICSLSGVLVIALPVPVIVSNFSRIYHQNQRADKRRAQQKVRLARIRLAKSGTTNAFLQYKQNGGLEDNGSGEEQALCVRNRSAFEQQHHHLLHCLEKTTCHEFTDELTFSEALGAVSLGGRTSRSTSVSSQPVGPSSLLSSCCPRRAKRRAIRLANSTASVSRGSMQELDTLAGLRRSPGPQSRSSLNAKPHDSLDLNCDSRDFVAAIISIPTPPANTPDESQPSSPGGGGRASSTLRNSRLGTPCLLPETVKISSL.

Topologically, residues Met1–Thr183 are cytoplasmic. The segment at Ala2–Leu20 is interaction with KCNIP1, KCNIP2, and other family members. Positions 104, 131, and 132 each coordinate Zn(2+). Positions Ala144–Ala164 are disordered. The chain crosses the membrane as a helical span at residues Ala184–Val205. The Extracellular segment spans residues Glu206–Ala230. A helical transmembrane segment spans residues Phe231–Ala252. Residues Ala253–Val263 are Cytoplasmic-facing. The chain crosses the membrane as a helical span at residues Met264–Asn284. Residues Glu285–Val287 are Extracellular-facing. Residues Ser288–His308 traverse the membrane as a helical; Voltage-sensor segment. Residues Ser309 to Ala323 lie on the Cytoplasmic side of the membrane. The tract at residues Gln310–Ala323 is S4-S5 linker. Residues Ser324 to Phe345 traverse the membrane as a helical segment. Residues Tyr346–Ile359 are Extracellular-facing. The helical intramembrane region spans Pro360 to Thr371. The Selectivity filter signature appears at Thr372–Asp377. The stretch at Thr372–Val379 is an intramembrane region. Over Pro380–Lys386 the chain is Extracellular. Residues Ile387–Tyr415 traverse the membrane as a helical segment. The Cytoplasmic segment spans residues His416–Leu647. The tract at residues Phe474–Thr489 is required for dendritic targeting. Positions Gly510 to Ser520 are enriched in low complexity. A disordered region spans residues Gly510–Ser531. Polar residues predominate over residues Gln521–Ser530. A Phosphoserine modification is found at Ser555. Disordered regions lie at residues Gly564–Ser584 and Ile601–Thr634.

It belongs to the potassium channel family. D (Shal) (TC 1.A.1.2) subfamily. Kv4.1/KCND1 sub-subfamily. In terms of assembly, component of heteromultimeric potassium channels. Identified in potassium channel complexes containing KCND1, KCND2, KCND3, KCNIP1, KCNIP2, KCNIP3, KCNIP4, DPP6 and DPP10. Detected in carotid body chemoreceptor cells and in frontal cortex.

Its subcellular location is the cell membrane. The catalysed reaction is K(+)(in) = K(+)(out). Functionally, A-type voltage-gated potassium channel that mediates transmembrane potassium transport in excitable membranes in the brain. Mediates A-type current I(SA) in suprachiasmatic nucleus (SCN) neurons. Exhibits a low-threshold A-type current with a hyperpolarized steady-state inactivation midpoint and the recovery process was steeply voltage-dependent, with recovery being markedly faster at more negative potentials. May regulates repetitive firing rates in the suprachiasmatic nucleus (SCN) neurons and circadian rhythms in neuronal excitability and behavior. Contributes to the regulation of the circadian rhythm of action potential firing in suprachiasmatic nucleus neurons, which regulates the circadian rhythm of locomotor activity. The regulatory subunit KCNIP1 modulates the kinetics of channel inactivation, increases the current amplitudes and accelerates recovery from inactivation, shifts activation in a depolarizing direction. The regulatory subunit DPP10 decreases the voltage sensitivity of the inactivation channel gating. This chain is A-type voltage-gated potassium channel KCND1, found in Oryctolagus cuniculus (Rabbit).